Reading from the N-terminus, the 421-residue chain is Putative leucine-rich repeat protein R380 (421 aa).

LRR repeat units follow at residues 48 to 69 (YLEK…QYLP), 70 to 85 (KIKE…THIP), 89 to 110 (NLIK…NQSK), 111 to 129 (LLYL…IFLP), 130 to 150 (ECRE…NYFP), 151 to 172 (NLRI…SSLI), and 173 to 191 (ELNI…PQLV).

In Acanthamoeba polyphaga (Amoeba), this protein is Putative leucine-rich repeat protein R380.